A 476-amino-acid polypeptide reads, in one-letter code: Bifunctional protein HldE (476 aa).

A ribokinase region spans residues 1 to 319; the sequence is MKVSLPAFEK…EALALHHGES (319 aa). 195–198 contacts ATP; sequence NMSE. The active site involves aspartate 264. The tract at residues 345–476 is cytidylyltransferase; that stretch reads MTNGCFDILH…AIIQNIMANQ (132 aa).

This sequence in the N-terminal section; belongs to the carbohydrate kinase PfkB family. In the C-terminal section; belongs to the cytidylyltransferase family. In terms of assembly, homodimer.

The catalysed reaction is D-glycero-beta-D-manno-heptose 7-phosphate + ATP = D-glycero-beta-D-manno-heptose 1,7-bisphosphate + ADP + H(+). The enzyme catalyses D-glycero-beta-D-manno-heptose 1-phosphate + ATP + H(+) = ADP-D-glycero-beta-D-manno-heptose + diphosphate. It functions in the pathway nucleotide-sugar biosynthesis; ADP-L-glycero-beta-D-manno-heptose biosynthesis; ADP-L-glycero-beta-D-manno-heptose from D-glycero-beta-D-manno-heptose 7-phosphate: step 1/4. Its pathway is nucleotide-sugar biosynthesis; ADP-L-glycero-beta-D-manno-heptose biosynthesis; ADP-L-glycero-beta-D-manno-heptose from D-glycero-beta-D-manno-heptose 7-phosphate: step 3/4. In terms of biological role, catalyzes the phosphorylation of D-glycero-D-manno-heptose 7-phosphate at the C-1 position to selectively form D-glycero-beta-D-manno-heptose-1,7-bisphosphate. Catalyzes the ADP transfer from ATP to D-glycero-beta-D-manno-heptose 1-phosphate, yielding ADP-D-glycero-beta-D-manno-heptose. In Shewanella putrefaciens (strain CN-32 / ATCC BAA-453), this protein is Bifunctional protein HldE.